We begin with the raw amino-acid sequence, 218 residues long: Ribose-5-phosphate isomerase A (218 aa).

Substrate-binding positions include T28–T31, D81–D84, and K94–G97. The active-site Proton acceptor is the E103. K121 is a binding site for substrate.

It belongs to the ribose 5-phosphate isomerase family. As to quaternary structure, homodimer.

It catalyses the reaction aldehydo-D-ribose 5-phosphate = D-ribulose 5-phosphate. The protein operates within carbohydrate degradation; pentose phosphate pathway; D-ribose 5-phosphate from D-ribulose 5-phosphate (non-oxidative stage): step 1/1. Its function is as follows. Catalyzes the reversible conversion of ribose-5-phosphate to ribulose 5-phosphate. This chain is Ribose-5-phosphate isomerase A, found in Shewanella woodyi (strain ATCC 51908 / MS32).